We begin with the raw amino-acid sequence, 390 residues long: GTPase Obg (390 aa).

One can recognise an Obg domain in the interval 1–159; sequence MKFVDEASIL…RELLLELMLL (159 aa). The interval 127–147 is disordered; sequence NTRFKSSVNRTPRQKTNGTPG. Polar residues predominate over residues 129–145; sequence RFKSSVNRTPRQKTNGT. Residues 160–333 form the OBG-type G domain; it reads ADVGMLGMPN…LCWDVMTFIL (174 aa). Residues 166-173, 191-195, 213-216, 283-286, and 314-316 contribute to the GTP site; these read GMPNAGKS, FTTLV, DIPG, NKID, and SAA. Residues Ser-173 and Thr-193 each coordinate Mg(2+).

This sequence belongs to the TRAFAC class OBG-HflX-like GTPase superfamily. OBG GTPase family. As to quaternary structure, monomer. Mg(2+) is required as a cofactor.

It is found in the cytoplasm. An essential GTPase which binds GTP, GDP and possibly (p)ppGpp with moderate affinity, with high nucleotide exchange rates and a fairly low GTP hydrolysis rate. Plays a role in control of the cell cycle, stress response, ribosome biogenesis and in those bacteria that undergo differentiation, in morphogenesis control. This is GTPase Obg from Shigella sonnei (strain Ss046).